We begin with the raw amino-acid sequence, 132 residues long: NADPH-dependent 7-cyano-7-deazaguanine reductase (132 aa).

C34 acts as the Thioimide intermediate in catalysis. D41 (proton donor) is an active-site residue. Substrate is bound by residues 56–58 and 75–76; these read IEL and HE.

It belongs to the GTP cyclohydrolase I family. QueF type 1 subfamily.

It localises to the cytoplasm. The enzyme catalyses 7-aminomethyl-7-carbaguanine + 2 NADP(+) = 7-cyano-7-deazaguanine + 2 NADPH + 3 H(+). It participates in tRNA modification; tRNA-queuosine biosynthesis. In terms of biological role, catalyzes the NADPH-dependent reduction of 7-cyano-7-deazaguanine (preQ0) to 7-aminomethyl-7-deazaguanine (preQ1). This chain is NADPH-dependent 7-cyano-7-deazaguanine reductase, found in Vesicomyosocius okutanii subsp. Calyptogena okutanii (strain HA).